Here is a 163-residue protein sequence, read N- to C-terminus: Nucleotide-binding protein MAP_4063c (163 aa).

The protein belongs to the YajQ family.

In terms of biological role, nucleotide-binding protein. The polypeptide is Nucleotide-binding protein MAP_4063c (Mycolicibacterium paratuberculosis (strain ATCC BAA-968 / K-10) (Mycobacterium paratuberculosis)).